Reading from the N-terminus, the 393-residue chain is MVTVEEVRKAQRAEGPATILAIGTVTPANCVNQSTYPDYYFRITNSEHKTELKEKFQRMCDKSMITKRYMHLTEEILKENPSFCEYMAPSLDARQDIAVVEVPKLGKEAAQSAIKEWGQPKSKITHVVFCTTSGVDMPGADYQLTKLLGLSPSVKRLMMYQQGCFAGGTVLRLAKDLAENNKGARVLIVCSEITVVTFRGPSETHLDSLVGQALFGDGAAAVIVGADPTPAEKPLFQLVSAAQTLAPDSCGAIDGHLREVGLTFHLLKDVPSVVSNNIEKCLFEAFNPLGISDWNSVFWIAHPGGPAILDQVEDKLGLKPEKLRATRHVLSEYGNMSSACVLFILDEMRKASSNAGLGTTGEGLEWGVLFGFGPGLTIETVVLHSVPIKPGPH.

Cys-164 is a catalytic residue.

The protein belongs to the thiolase-like superfamily. Chalcone/stilbene synthases family.

The catalysed reaction is (E)-4-coumaroyl-CoA + 3 malonyl-CoA + 3 H(+) = 2',4,4',6'-tetrahydroxychalcone + 3 CO2 + 4 CoA. It participates in secondary metabolite biosynthesis; flavonoid biosynthesis. Functionally, the primary product of this enzyme is 4,2',4',6'-tetrahydroxychalcone (also termed naringenin-chalcone or chalcone) which can under specific conditions spontaneously isomerize into naringenin. The protein is Chalcone synthase LF2 (CHS-LF2) of Ipomoea batatas (Sweet potato).